Consider the following 893-residue polypeptide: Alanine--tRNA ligase (893 aa).

Residues H574, H578, C678, and H682 each contribute to the Zn(2+) site.

This sequence belongs to the class-II aminoacyl-tRNA synthetase family. Requires Zn(2+) as cofactor.

The protein localises to the cytoplasm. It carries out the reaction tRNA(Ala) + L-alanine + ATP = L-alanyl-tRNA(Ala) + AMP + diphosphate. In terms of biological role, catalyzes the attachment of alanine to tRNA(Ala) in a two-step reaction: alanine is first activated by ATP to form Ala-AMP and then transferred to the acceptor end of tRNA(Ala). Also edits incorrectly charged Ser-tRNA(Ala) and Gly-tRNA(Ala) via its editing domain. This Bifidobacterium longum (strain NCC 2705) protein is Alanine--tRNA ligase.